The sequence spans 209 residues: DNA transformation protein TfoX1 (209 aa).

The protein belongs to the Sxy/TfoX family.

Its function is as follows. Required for DNA transformation jointly with TfoY (tfoX2). The sequence is that of DNA transformation protein TfoX1 from Aliivibrio fischeri (strain ATCC 700601 / ES114) (Vibrio fischeri).